The chain runs to 248 residues: Large ribosomal subunit protein uL4 (248 aa).

The segment at 45–105 (PYGADPYAGM…KDQSKSVNTK (61 aa)) is disordered. Residues 92–105 (PKAEKDQSKSVNTK) show a composition bias toward basic and acidic residues.

Belongs to the universal ribosomal protein uL4 family. Part of the 50S ribosomal subunit.

Functionally, one of the primary rRNA binding proteins, this protein initially binds near the 5'-end of the 23S rRNA. It is important during the early stages of 50S assembly. It makes multiple contacts with different domains of the 23S rRNA in the assembled 50S subunit and ribosome. Forms part of the polypeptide exit tunnel. In Haloquadratum walsbyi (strain DSM 16790 / HBSQ001), this protein is Large ribosomal subunit protein uL4.